Here is a 349-residue protein sequence, read N- to C-terminus: 5-deoxyribose 1-phosphate isomerase (349 aa).

Substrate is bound by residues R49 to A51, R92, and Q199. Catalysis depends on D240, which acts as the Proton donor. N250–K251 is a substrate binding site.

The protein belongs to the EIF-2B alpha/beta/delta subunits family. DrdI subfamily.

The enzyme catalyses 5-deoxy-alpha-D-ribose 1-phosphate = 5-deoxy-D-ribulose 1-phosphate. It participates in carbohydrate degradation. In terms of biological role, catalyzes the isomerization of 5-deoxy-alpha-D-ribose 1-phosphate to 5-deoxy-D-ribulose 1-phosphate, as part of a 5-deoxyribose salvage pathway that recycles this toxic radical SAM enzyme by-product to mainstream metabolites. This chain is 5-deoxyribose 1-phosphate isomerase, found in Clostridium botulinum (strain 657 / Type Ba4).